A 115-amino-acid chain; its full sequence is Large ribosomal subunit protein uL24 (115 aa).

Disordered regions lie at residues 45 to 77 (VRQS…STGK) and 96 to 115 (KASG…KAAS).

This sequence belongs to the universal ribosomal protein uL24 family. Part of the 50S ribosomal subunit.

One of two assembly initiator proteins, it binds directly to the 5'-end of the 23S rRNA, where it nucleates assembly of the 50S subunit. Its function is as follows. One of the proteins that surrounds the polypeptide exit tunnel on the outside of the subunit. The protein is Large ribosomal subunit protein uL24 of Rhodopirellula baltica (strain DSM 10527 / NCIMB 13988 / SH1).